A 453-amino-acid chain; its full sequence is Bifunctional protein GlmU (453 aa).

The interval 1 to 225 (MHAHVILAAG…AEEALGVNTR (225 aa)) is pyrophosphorylase. UDP-N-acetyl-alpha-D-glucosamine-binding positions include 7-10 (LAAG), Lys-21, Gln-72, and 77-78 (GT). Asp-102 serves as a coordination point for Mg(2+). UDP-N-acetyl-alpha-D-glucosamine contacts are provided by Gly-138, Glu-152, Asn-167, and Asn-223. Position 223 (Asn-223) interacts with Mg(2+). The linker stretch occupies residues 226–246 (EELARVEGVLLRRLRAEWMGK). The N-acetyltransferase stretch occupies residues 247–453 (GVRMILPETI…GYALRKLGEG (207 aa)). Positions 329 and 347 each coordinate UDP-N-acetyl-alpha-D-glucosamine. His-359 serves as the catalytic Proton acceptor. 2 residues coordinate UDP-N-acetyl-alpha-D-glucosamine: Tyr-362 and Asn-373. Acetyl-CoA is bound by residues Ala-376, 382 to 383 (NY), Ser-401, Ala-419, and Arg-436.

It in the N-terminal section; belongs to the N-acetylglucosamine-1-phosphate uridyltransferase family. The protein in the C-terminal section; belongs to the transferase hexapeptide repeat family. As to quaternary structure, homotrimer. Mg(2+) serves as cofactor.

The protein localises to the cytoplasm. The catalysed reaction is alpha-D-glucosamine 1-phosphate + acetyl-CoA = N-acetyl-alpha-D-glucosamine 1-phosphate + CoA + H(+). It carries out the reaction N-acetyl-alpha-D-glucosamine 1-phosphate + UTP + H(+) = UDP-N-acetyl-alpha-D-glucosamine + diphosphate. Its pathway is nucleotide-sugar biosynthesis; UDP-N-acetyl-alpha-D-glucosamine biosynthesis; N-acetyl-alpha-D-glucosamine 1-phosphate from alpha-D-glucosamine 6-phosphate (route II): step 2/2. The protein operates within nucleotide-sugar biosynthesis; UDP-N-acetyl-alpha-D-glucosamine biosynthesis; UDP-N-acetyl-alpha-D-glucosamine from N-acetyl-alpha-D-glucosamine 1-phosphate: step 1/1. It participates in bacterial outer membrane biogenesis; LPS lipid A biosynthesis. Functionally, catalyzes the last two sequential reactions in the de novo biosynthetic pathway for UDP-N-acetylglucosamine (UDP-GlcNAc). The C-terminal domain catalyzes the transfer of acetyl group from acetyl coenzyme A to glucosamine-1-phosphate (GlcN-1-P) to produce N-acetylglucosamine-1-phosphate (GlcNAc-1-P), which is converted into UDP-GlcNAc by the transfer of uridine 5-monophosphate (from uridine 5-triphosphate), a reaction catalyzed by the N-terminal domain. This Thermus thermophilus (strain ATCC 27634 / DSM 579 / HB8) protein is Bifunctional protein GlmU.